Consider the following 459-residue polypeptide: Asperlicin C monooxygenase (459 aa).

Residues Asp-49, Ala-62, and Arg-121 each contribute to the FAD site. Arg-199 is a catalytic residue. The FAD site is built by Asp-323 and Ala-336.

The protein belongs to the paxM FAD-dependent monooxygenase family. Requires FAD as cofactor.

It catalyses the reaction asperlicin C + NADPH + O2 + H(+) = asperlicin E + NADP(+) + H2O. The enzyme catalyses asperlicin C + NADH + O2 + H(+) = asperlicin E + NAD(+) + H2O. Catalyzes the conversion of asperlicin A to form asperlicin E, a potent cholecystokinin receptor CCK(A) antagonist. The chain is Asperlicin C monooxygenase from Petromyces alliaceus (Aspergillus alliaceus).